Consider the following 169-residue polypeptide: Peptide deformylase (169 aa).

Residues cysteine 92 and histidine 134 each coordinate Fe cation. Glutamate 135 is an active-site residue. Histidine 138 serves as a coordination point for Fe cation.

It belongs to the polypeptide deformylase family. Requires Fe(2+) as cofactor.

It catalyses the reaction N-terminal N-formyl-L-methionyl-[peptide] + H2O = N-terminal L-methionyl-[peptide] + formate. Functionally, removes the formyl group from the N-terminal Met of newly synthesized proteins. Requires at least a dipeptide for an efficient rate of reaction. N-terminal L-methionine is a prerequisite for activity but the enzyme has broad specificity at other positions. The protein is Peptide deformylase of Cellvibrio japonicus (strain Ueda107) (Pseudomonas fluorescens subsp. cellulosa).